Here is a 143-residue protein sequence, read N- to C-terminus: Large ribosomal subunit protein uL11 (143 aa).

The protein belongs to the universal ribosomal protein uL11 family. Part of the ribosomal stalk of the 50S ribosomal subunit. Interacts with L10 and the large rRNA to form the base of the stalk. L10 forms an elongated spine to which L12 dimers bind in a sequential fashion forming a multimeric L10(L12)X complex. In terms of processing, one or more lysine residues are methylated.

Functionally, forms part of the ribosomal stalk which helps the ribosome interact with GTP-bound translation factors. In Methylibium petroleiphilum (strain ATCC BAA-1232 / LMG 22953 / PM1), this protein is Large ribosomal subunit protein uL11.